We begin with the raw amino-acid sequence, 21 residues long: Nigrocin-2JDa (21 aa).

A disulfide bridge connects residues C15 and C21.

Expressed by the skin glands.

It localises to the secreted. Has antibacterial activity against E.coli ATCC 25992 (MIC=16 uM), E.coli CIB 84492 (MIC=16 uM), S.aureus ATCC 25923 (MIC=16 uM) and S.aureus CIB 85462 (MIC=8 uM). Has antifungal activity against C.albicans (MIC=63 uM). Has hemolytic activity against rabbit erythrocytes. This Odorrana jingdongensis (Jingdong frog) protein is Nigrocin-2JDa.